The chain runs to 132 residues: MGQSFNAPYEAIGEELLSQLVDTFYERVASHPLLKPIFPSDLTETARKQKQFLTQYLGGPPLYTEEHGHPMLRARHLPFPITNERADAWLSCMKDAMDHVGLEGEIREFLFGRLELTARHMVNQTEAEDRSS.

Heme contacts are provided by threonine 45, lysine 48, tyrosine 63, and histidine 76.

The protein belongs to the truncated hemoglobin family. Group II subfamily. In terms of assembly, monomer. Requires heme as cofactor.

Functionally, hemoglobin-like protein that exhibits a low peroxidase activity. Its very high oxygen affinity may rule out the possibility that it is involved in oxygen transport. This Bacillus subtilis (strain 168) protein is Group 2 truncated hemoglobin YjbI (yjbI).